Here is a 236-residue protein sequence, read N- to C-terminus: Probable transcriptional regulatory protein UUR10_0292 (236 aa).

Belongs to the TACO1 family.

Its subcellular location is the cytoplasm. The chain is Probable transcriptional regulatory protein UUR10_0292 from Ureaplasma urealyticum serovar 10 (strain ATCC 33699 / Western).